We begin with the raw amino-acid sequence, 298 residues long: Ethanolamine ammonia-lyase small subunit (298 aa).

Residues valine 210, glutamate 231, and cysteine 261 each coordinate adenosylcob(III)alamin.

The protein belongs to the EutC family. As to quaternary structure, the basic unit is a heterodimer which dimerizes to form tetramers. The heterotetramers trimerize; 6 large subunits form a core ring with 6 small subunits projecting outwards. Adenosylcob(III)alamin is required as a cofactor.

The protein localises to the bacterial microcompartment. It carries out the reaction ethanolamine = acetaldehyde + NH4(+). It participates in amine and polyamine degradation; ethanolamine degradation. Its function is as follows. Catalyzes the deamination of various vicinal amino-alcohols to oxo compounds. Allows this organism to utilize ethanolamine as the sole source of nitrogen and carbon in the presence of external vitamin B12. In Salmonella agona (strain SL483), this protein is Ethanolamine ammonia-lyase small subunit.